We begin with the raw amino-acid sequence, 190 residues long: Membrane protein FAM174A (190 aa).

The first 29 residues, 1–29 (MPTRRGCSGPCHFLASAFVLLLLPALNQS), serve as a signal peptide directing secretion. N-linked (GlcNAc...) asparagine glycans are attached at residues asparagine 27 and asparagine 83. Over 30 to 123 (VVLPSTVPRA…NPSDKPMTQR (94 aa)) the chain is Extracellular. The tract at residues 37–119 (PRAVQESKPL…AVSPNPSDKP (83 aa)) is disordered. A helical membrane pass occupies residues 124-144 (ALTVLVVVSAAVLVYFVVRTV). The Cytoplasmic segment spans residues 145–190 (RMRRRNRKTRRYGVLDTNIENMELTPLEQDDEDDDNTLFDANHPRR). Residues 168–190 (LTPLEQDDEDDDNTLFDANHPRR) form a disordered region. Positions 172–181 (EQDDEDDDNT) are enriched in acidic residues.

The protein belongs to the FAM174 family.

It is found in the membrane. The sequence is that of Membrane protein FAM174A (Fam174a) from Rattus norvegicus (Rat).